A 116-amino-acid polypeptide reads, in one-letter code: Non-specific lipid-transfer protein 5 (116 aa).

A signal peptide spans 1 to 24; the sequence is MARSMKLACVVLVMCMIVAPMAEG. Disulfide bonds link Cys-28-Cys-75, Cys-38-Cys-52, Cys-53-Cys-98, and Cys-73-Cys-112.

It belongs to the plant LTP family.

Plant non-specific lipid-transfer proteins transfer phospholipids as well as galactolipids across membranes. May play a role in wax or cutin deposition in the cell walls of expanding epidermal cells and certain secretory tissues. This is Non-specific lipid-transfer protein 5 from Lens culinaris (Lentil).